Here is an 88-residue protein sequence, read N- to C-terminus: MNRKTLLVIFFVTLLIAEEVNSFRLGGFLKKIWRSKLVKRLRSKGKQLLKEALAPEPAPEPAPEPAPEAAPEAAPEPAAAAPERRRRR.

Positions 1 to 22 are cleaved as a signal peptide; that stretch reads MNRKTLLVIFFVTLLIAEEVNS. Positions 23–45 are excised as a propeptide; that stretch reads FRLGGFLKKIWRSKLVKRLRSKG. Residues 49–88 form a disordered region; the sequence is LKEALAPEPAPEPAPEPAPEAAPEAAPEPAAAAPERRRRR. Positions 56–68 are enriched in pro residues; sequence EPAPEPAPEPAPE. PAPE repeat units follow at residues 57-60, 61-64, and 65-68; these read PAPE. The segment covering 69–81 has biased composition (low complexity); that stretch reads AAPEAAPEPAAAA.

In terms of tissue distribution, expressed by the venom gland.

The protein resides in the secreted. The sequence is that of Pape peptide from Tityus serrulatus (Brazilian scorpion).